The chain runs to 90 residues: Protein LIM1 (90 aa).

An N-terminal signal peptide occupies residues 1 to 26 (MASMKSLATAILVVLLLAALSREGRS). Intrachain disulfides connect cysteine 29-cysteine 66, cysteine 39-cysteine 55, cysteine 56-cysteine 81, and cysteine 68-cysteine 88.

Belongs to the A9/FIL1 family.

The protein localises to the secreted. This chain is Protein LIM1 (LIM1), found in Lilium longiflorum (Trumpet lily).